The primary structure comprises 354 residues: S-adenosylmethionine:tRNA ribosyltransferase-isomerase (354 aa).

It belongs to the QueA family. Monomer.

The protein resides in the cytoplasm. It carries out the reaction 7-aminomethyl-7-carbaguanosine(34) in tRNA + S-adenosyl-L-methionine = epoxyqueuosine(34) in tRNA + adenine + L-methionine + 2 H(+). Its pathway is tRNA modification; tRNA-queuosine biosynthesis. Transfers and isomerizes the ribose moiety from AdoMet to the 7-aminomethyl group of 7-deazaguanine (preQ1-tRNA) to give epoxyqueuosine (oQ-tRNA). The protein is S-adenosylmethionine:tRNA ribosyltransferase-isomerase of Azorhizobium caulinodans (strain ATCC 43989 / DSM 5975 / JCM 20966 / LMG 6465 / NBRC 14845 / NCIMB 13405 / ORS 571).